A 158-amino-acid chain; its full sequence is 6,7-dimethyl-8-ribityllumazine synthase (158 aa).

5-amino-6-(D-ribitylamino)uracil-binding positions include phenylalanine 22, 57–59 (AVE), and 81–83 (AVI). Residue 86-87 (GT) participates in (2S)-2-hydroxy-3-oxobutyl phosphate binding. Residue histidine 89 is the Proton donor of the active site. Phenylalanine 114 contacts 5-amino-6-(D-ribitylamino)uracil. Arginine 128 is a (2S)-2-hydroxy-3-oxobutyl phosphate binding site.

The protein belongs to the DMRL synthase family. In terms of assembly, forms an icosahedral capsid composed of 60 subunits, arranged as a dodecamer of pentamers.

It carries out the reaction (2S)-2-hydroxy-3-oxobutyl phosphate + 5-amino-6-(D-ribitylamino)uracil = 6,7-dimethyl-8-(1-D-ribityl)lumazine + phosphate + 2 H2O + H(+). It functions in the pathway cofactor biosynthesis; riboflavin biosynthesis; riboflavin from 2-hydroxy-3-oxobutyl phosphate and 5-amino-6-(D-ribitylamino)uracil: step 1/2. Its function is as follows. Catalyzes the formation of 6,7-dimethyl-8-ribityllumazine by condensation of 5-amino-6-(D-ribitylamino)uracil with 3,4-dihydroxy-2-butanone 4-phosphate. This is the penultimate step in the biosynthesis of riboflavin. In Shewanella piezotolerans (strain WP3 / JCM 13877), this protein is 6,7-dimethyl-8-ribityllumazine synthase.